The chain runs to 2147 residues: Large tegument protein deneddylase (2147 aa).

The interval 1 to 233 (MKIVRASRDQ…PDIDASVMSG (233 aa)) is deubiquitination activity. The region spanning 3-223 (IVRASRDQSA…LVQIMDQYKD (221 aa)) is the Peptidase C76 domain. Catalysis depends on residues C23, D156, and H158. 4 disordered regions span residues 228-301 (ASVM…RSRR), 1419-1438 (EIGQHKKDPPSTGEEVGLPE), 1567-1589 (SSSSGGGNGSGASSRQKDQQNAT), and 2034-2072 (RDPPRLKRASGDSSSSVPAEDRDPDARPQDSVPDQSLSE). The segment covering 240 to 261 (SISSSAASASASVSPLPSGAAS) has biased composition (low complexity). T292 is a region of interest (interaction with inner tegument protein). Positions 2052–2061 (AEDRDPDARP) are enriched in basic and acidic residues.

This sequence belongs to the herpesviridae large tegument protein family. As to quaternary structure, interacts with host CUL1 and CUL4A; these interactions inhibit the E3 ligase activity of cullins. Interacts with inner tegument protein. Interacts with capsid vertex specific component CVC2. Interacts with the major capsid protein/MCP.

Its subcellular location is the virion tegument. It localises to the host cytoplasm. The protein resides in the host nucleus. The catalysed reaction is Thiol-dependent hydrolysis of ester, thioester, amide, peptide and isopeptide bonds formed by the C-terminal Gly of ubiquitin (a 76-residue protein attached to proteins as an intracellular targeting signal).. In terms of biological role, large tegument protein that plays multiple roles in the viral cycle. During viral entry, remains associated with the capsid while most of the tegument is detached and participates in the capsid transport toward the host nucleus. Plays a role in the routing of the capsid at the nuclear pore complex and subsequent uncoating. Within the host nucleus, acts as a deneddylase and promotes the degradation of nuclear CRLs (cullin-RING ubiquitin ligases) and thereby stabilizes nuclear CRL substrates, while cytoplasmic CRLs remain unaffected. These modifications prevent host cell cycle S-phase progression and create a favorable environment allowing efficient viral genome replication. Participates later in the secondary envelopment of capsids. Indeed, plays a linker role for the association of the outer viral tegument to the capsids together with the inner tegument protein. In Mus musculus (Mouse), this protein is Large tegument protein deneddylase (M48).